A 147-amino-acid polypeptide reads, in one-letter code: uncharacterized protein (147 aa).

It to M.pneumoniae MPN_465.

This is an uncharacterized protein from Mycoplasma pneumoniae (strain ATCC 29342 / M129 / Subtype 1) (Mycoplasmoides pneumoniae).